A 364-amino-acid polypeptide reads, in one-letter code: tRNA 2-selenouridine synthase (364 aa).

In terms of domain architecture, Rhodanese spans Leu-14–Trp-137. The active-site S-selanylcysteine intermediate is Cys-97.

Belongs to the SelU family. In terms of assembly, monomer.

The enzyme catalyses 5-methylaminomethyl-2-thiouridine(34) in tRNA + selenophosphate + (2E)-geranyl diphosphate + H2O + H(+) = 5-methylaminomethyl-2-selenouridine(34) in tRNA + (2E)-thiogeraniol + phosphate + diphosphate. It catalyses the reaction 5-methylaminomethyl-2-thiouridine(34) in tRNA + (2E)-geranyl diphosphate = 5-methylaminomethyl-S-(2E)-geranyl-thiouridine(34) in tRNA + diphosphate. The catalysed reaction is 5-methylaminomethyl-S-(2E)-geranyl-thiouridine(34) in tRNA + selenophosphate + H(+) = 5-methylaminomethyl-2-(Se-phospho)selenouridine(34) in tRNA + (2E)-thiogeraniol. It carries out the reaction 5-methylaminomethyl-2-(Se-phospho)selenouridine(34) in tRNA + H2O = 5-methylaminomethyl-2-selenouridine(34) in tRNA + phosphate. Functionally, involved in the post-transcriptional modification of the uridine at the wobble position (U34) of tRNA(Lys), tRNA(Glu) and tRNA(Gln). Catalyzes the conversion of 2-thiouridine (S2U-RNA) to 2-selenouridine (Se2U-RNA). Acts in a two-step process involving geranylation of 2-thiouridine (S2U) to S-geranyl-2-thiouridine (geS2U) and subsequent selenation of the latter derivative to 2-selenouridine (Se2U) in the tRNA chain. The polypeptide is tRNA 2-selenouridine synthase (Salmonella dublin (strain CT_02021853)).